Reading from the N-terminus, the 452-residue chain is Photoreceptor ankyrin repeat protein (452 aa).

4 ANK repeats span residues 94 to 123 (CRLG…SPEE), 130 to 160 (NGRT…DVNQ), 164 to 193 (GGDT…GLDL), and 223 to 257 (RGKT…QLSQ). 2 disordered regions span residues 335–369 (LGTR…SPWV) and 405–427 (SKAS…QSLA). The segment covering 349–362 (APPPPLVPQSPPGS) has biased composition (pro residues). The span at 406–424 (KASSSSHQCQPKPSPSGHQ) shows a compositional bias: polar residues.

The protein resides in the cytoplasm. Its subcellular location is the cytosol. It is found in the nucleus. In terms of biological role, acts as a transcriptional repressor for CRX-activated photoreceptor gene regulation. This Homo sapiens (Human) protein is Photoreceptor ankyrin repeat protein.